Here is a 184-residue protein sequence, read N- to C-terminus: 3-hydroxydecanoyl-[acyl-carrier-protein] dehydratase (184 aa).

The active site involves H77.

This sequence belongs to the thioester dehydratase family. FabA subfamily. In terms of assembly, homodimer.

Its subcellular location is the cytoplasm. It carries out the reaction a (3R)-hydroxyacyl-[ACP] = a (2E)-enoyl-[ACP] + H2O. The enzyme catalyses (3R)-hydroxydecanoyl-[ACP] = (2E)-decenoyl-[ACP] + H2O. The catalysed reaction is (2E)-decenoyl-[ACP] = (3Z)-decenoyl-[ACP]. It functions in the pathway lipid metabolism; fatty acid biosynthesis. Functionally, necessary for the introduction of cis unsaturation into fatty acids. Catalyzes the dehydration of (3R)-3-hydroxydecanoyl-ACP to E-(2)-decenoyl-ACP and then its isomerization to Z-(3)-decenoyl-ACP. Can catalyze the dehydratase reaction for beta-hydroxyacyl-ACPs with saturated chain lengths up to 16:0, being most active on intermediate chain length. The polypeptide is 3-hydroxydecanoyl-[acyl-carrier-protein] dehydratase (Hyphomonas neptunium (strain ATCC 15444)).